The following is a 132-amino-acid chain: NADH-quinone oxidoreductase subunit A (132 aa).

3 helical membrane-spanning segments follow: residues 14-34 (FFTF…ISWI), 66-86 (FYLV…LYAW), and 96-116 (IGFI…IYLI).

The protein belongs to the complex I subunit 3 family. NDH-1 is composed of 13 different subunits. Subunits NuoA, H, J, K, L, M, N constitute the membrane sector of the complex.

The protein resides in the cell membrane. It carries out the reaction a quinone + NADH + 5 H(+)(in) = a quinol + NAD(+) + 4 H(+)(out). Functionally, NDH-1 shuttles electrons from NADH, via FMN and iron-sulfur (Fe-S) centers, to quinones in the respiratory chain. The immediate electron acceptor for the enzyme in this species is believed to be ubiquinone. Couples the redox reaction to proton translocation (for every two electrons transferred, four hydrogen ions are translocated across the cytoplasmic membrane), and thus conserves the redox energy in a proton gradient. This is NADH-quinone oxidoreductase subunit A from Buchnera aphidicola subsp. Baizongia pistaciae (strain Bp).